The primary structure comprises 269 residues: Ribosomal RNA small subunit methyltransferase A (269 aa).

S-adenosyl-L-methionine contacts are provided by N20, L22, G47, E68, D90, and N110.

The protein belongs to the class I-like SAM-binding methyltransferase superfamily. rRNA adenine N(6)-methyltransferase family. RsmA subfamily.

It localises to the cytoplasm. The catalysed reaction is adenosine(1518)/adenosine(1519) in 16S rRNA + 4 S-adenosyl-L-methionine = N(6)-dimethyladenosine(1518)/N(6)-dimethyladenosine(1519) in 16S rRNA + 4 S-adenosyl-L-homocysteine + 4 H(+). Specifically dimethylates two adjacent adenosines (A1518 and A1519) in the loop of a conserved hairpin near the 3'-end of 16S rRNA in the 30S particle. May play a critical role in biogenesis of 30S subunits. This Chlorobium phaeobacteroides (strain DSM 266 / SMG 266 / 2430) protein is Ribosomal RNA small subunit methyltransferase A.